Reading from the N-terminus, the 889-residue chain is MAELPQSRINERNITSEMRESFLDYAMSVIVARALPDVRDGLKPVHRRILYGLNEQGMTPDKSYKKSARIVGDVMGKYHPHGDSSIYEAMVRMAQDFSYRYPLVDGQGNFGSMDGDGAAAMRYTEARMTKITLELLRDINKDTIDFIDNYDGNEREPSVLPARFPNLLANGASGIAVGMATNIPPHNLTELINGVLSLSKNPDISIAELMEDIEGPDFPTAGLILGKSGIRRAYETGRGSIQMRSRAVIEERGGGRQRIVVTEIPFQVNKARMIEKIAELVRDKKIDGITDLRDETSLRTGVRVVIDVRKDANASVILNNLYKQTPLQTSFGVNMIALVNGRPKLINLKEALVHYLEHQKTVVRRRTQYNLRKAKDRAHILEGLRIALDHIDEIISTIRESDTDKVAMESLQQRFKLSEKQAQAILDMRLRRLTGLERDKIEAEYNELLNYISELETILADEEVLLQLVRDELTEIRDRFGDDRRTEIQLGGFEDLEDEDLIPEEQIVITLSHNNYIKRLPVSTYRAQNRGGRGVQGMNTLEEDFVSQLVTLSTHDHVLFFTNKGRVYKLKGYEVPELSRQSKGIPVVNAIELENDEVISTMIAVKDLESEDNFLVFATKRGVVKRSALSNFSRINRNGKIAISFREDDELIAVRLTSGQEDILIGTSHASLIRFPESTLRPLGRTATGVKGITLREGDEVVGLDVAHANSVDEVLVVTENGYGKRTPVNDYRLSNRGGKGIKTATITERNGNVVCITTVTGEEDLMIVTNAGVIIRLDVADISQNGRAAQGVRLIRLGDDQFVSTVAKVKEDAEDETNEDEQSTSTVSEDGTEQQREAVVNDETPGNAIHTEVIDSEENDEDGRIEVRQDFMDRVEEDIQQSSDEDEE.

Residues 35–501 (LPDVRDGLKP…GFEDLEDEDL (467 aa)) form the Topo IIA-type catalytic domain. The active-site O-(5'-phospho-DNA)-tyrosine intermediate is Tyr123. The GyrA-box motif lies at 528–534 (QNRGGRG). The tract at residues 810–889 (VKEDAEDETN…IQQSSDEDEE (80 aa)) is disordered. The segment covering 813-823 (DAEDETNEDEQ) has biased composition (acidic residues). Over residues 863-875 (DGRIEVRQDFMDR) the composition is skewed to basic and acidic residues. Acidic residues predominate over residues 876-889 (VEEDIQQSSDEDEE).

The protein belongs to the type II topoisomerase GyrA/ParC subunit family. In terms of assembly, heterotetramer, composed of two GyrA and two GyrB chains. In the heterotetramer, GyrA contains the active site tyrosine that forms a transient covalent intermediate with DNA, while GyrB binds cofactors and catalyzes ATP hydrolysis.

It is found in the cytoplasm. The enzyme catalyses ATP-dependent breakage, passage and rejoining of double-stranded DNA.. A type II topoisomerase that negatively supercoils closed circular double-stranded (ds) DNA in an ATP-dependent manner to modulate DNA topology and maintain chromosomes in an underwound state. Negative supercoiling favors strand separation, and DNA replication, transcription, recombination and repair, all of which involve strand separation. Also able to catalyze the interconversion of other topological isomers of dsDNA rings, including catenanes and knotted rings. Type II topoisomerases break and join 2 DNA strands simultaneously in an ATP-dependent manner. This is DNA gyrase subunit A from Staphylococcus aureus (strain N315).